The following is a 311-amino-acid chain: Protoheme IX farnesyltransferase (311 aa).

8 helical membrane passes run 19-39 (VLAY…VATI), 55-75 (ILAT…LNCV), 101-121 (NAFV…WWQA), 123-143 (LLSG…YTLG), 169-189 (AVTG…FFWT), 221-241 (VTKQ…ALVP), 242-262 (ATGV…LLMA), and 290-310 (VVFC…GSFF).

This sequence belongs to the UbiA prenyltransferase family. Protoheme IX farnesyltransferase subfamily.

It is found in the cell membrane. The enzyme catalyses heme b + (2E,6E)-farnesyl diphosphate + H2O = Fe(II)-heme o + diphosphate. It participates in porphyrin-containing compound metabolism; heme O biosynthesis; heme O from protoheme: step 1/1. Functionally, converts heme B (protoheme IX) to heme O by substitution of the vinyl group on carbon 2 of heme B porphyrin ring with a hydroxyethyl farnesyl side group. The polypeptide is Protoheme IX farnesyltransferase (Nocardia farcinica (strain IFM 10152)).